The sequence spans 440 residues: Ribulose bisphosphate carboxylase large chain (440 aa).

N6,N6,N6-trimethyllysine is present on Lys4. 2 residues coordinate substrate: Asn113 and Thr163. The active-site Proton acceptor is the Lys165. Residue Lys167 participates in substrate binding. Residues Lys191, Asp193, and Glu194 each contribute to the Mg(2+) site. Lys191 carries the post-translational modification N6-carboxylysine. The active-site Proton acceptor is His284. Positions 285, 317, and 369 each coordinate substrate.

It belongs to the RuBisCO large chain family. Type I subfamily. In terms of assembly, heterohexadecamer of 8 large chains and 8 small chains; disulfide-linked. The disulfide link is formed within the large subunit homodimers. The cofactor is Mg(2+). The disulfide bond which can form in the large chain dimeric partners within the hexadecamer appears to be associated with oxidative stress and protein turnover.

It localises to the plastid. The protein localises to the chloroplast. It carries out the reaction 2 (2R)-3-phosphoglycerate + 2 H(+) = D-ribulose 1,5-bisphosphate + CO2 + H2O. The enzyme catalyses D-ribulose 1,5-bisphosphate + O2 = 2-phosphoglycolate + (2R)-3-phosphoglycerate + 2 H(+). RuBisCO catalyzes two reactions: the carboxylation of D-ribulose 1,5-bisphosphate, the primary event in carbon dioxide fixation, as well as the oxidative fragmentation of the pentose substrate in the photorespiration process. Both reactions occur simultaneously and in competition at the same active site. The polypeptide is Ribulose bisphosphate carboxylase large chain (Polystichum munitum (Western sword-fern)).